The primary structure comprises 94 residues: Large ribosomal subunit protein eL37 (94 aa).

C19, C22, C34, and C37 together coordinate Zn(2+). The segment at 19-37 (CRRCGKATYHKQKLRCAAC) adopts a C4-type zinc-finger fold.

The protein belongs to the eukaryotic ribosomal protein eL37 family. Zn(2+) serves as cofactor.

Its subcellular location is the cytoplasm. In terms of biological role, binds to the 23S rRNA. This Tetrahymena thermophila (strain SB210) protein is Large ribosomal subunit protein eL37 (RPL37).